The chain runs to 150 residues: Small ribosomal subunit protein uS11y (150 aa).

A Phosphoserine modification is found at Ser19.

The protein belongs to the universal ribosomal protein uS11 family.

It is found in the cytoplasm. This Arabidopsis thaliana (Mouse-ear cress) protein is Small ribosomal subunit protein uS11y (RPS14B).